A 286-amino-acid chain; its full sequence is Nucleotide-binding protein APL_0334 (286 aa).

8-15 (GRSGSGKS) provides a ligand contact to ATP. Position 56–59 (56–59 (DIRN)) interacts with GTP.

The protein belongs to the RapZ-like family.

Functionally, displays ATPase and GTPase activities. The sequence is that of Nucleotide-binding protein APL_0334 from Actinobacillus pleuropneumoniae serotype 5b (strain L20).